The following is a 535-amino-acid chain: Dynein axonemal assembly factor 8 (535 aa).

5 disordered regions span residues 112-215, 228-267, 344-380, 395-444, and 461-535; these read AELA…QERR, RDAC…EGPP, PADT…QGMR, TVPP…LRSC, and IAQP…LDQL. The span at 125–139 shows a compositional bias: basic and acidic residues; the sequence is RTKDASSQEGRDPGR. The segment covering 166 to 175 has biased composition (polar residues); it reads GSLSFNTKGS. Residue S175 is modified to Phosphoserine. S362 carries the phosphoserine modification. A compositionally biased stretch (acidic residues) spans 415-424; sequence DSEEEEEEVE. The segment covering 435-444 has biased composition (polar residues); the sequence is SPSSLGLRSC.

It localises to the dynein axonemal particle. The protein resides in the cytoplasm. In terms of biological role, in cyliated cells, dynein axonemal particle-specific protein required for deployment of ODA to the axoneme. Interacts with outer dynein arm (ODA) subunits. The polypeptide is Dynein axonemal assembly factor 8 (DNAAF8) (Macaca fascicularis (Crab-eating macaque)).